A 148-amino-acid polypeptide reads, in one-letter code: Large ribosomal subunit protein uL15 (148 aa).

The tract at residues 1 to 57 (MRLNDVKPQKGSKKRRRRVGRGISAGQGASAGLGMRGQKSRSGSGTRPGFEGGQQPL) is disordered. The span at 10 to 20 (KGSKKRRRRVG) shows a compositional bias: basic residues. A compositionally biased stretch (gly residues) spans 23–35 (ISAGQGASAGLGM).

The protein belongs to the universal ribosomal protein uL15 family. Part of the 50S ribosomal subunit.

Functionally, binds to the 23S rRNA. The polypeptide is Large ribosomal subunit protein uL15 (Trichormus variabilis (strain ATCC 29413 / PCC 7937) (Anabaena variabilis)).